A 153-amino-acid polypeptide reads, in one-letter code: uncharacterized protein (153 aa).

3 consecutive transmembrane segments (helical) span residues 17 to 37 (ITLI…SMFF), 44 to 64 (FLLC…IGMG), and 118 to 138 (FVFI…TLII).

This sequence to M.jannaschii MJ0129 and MJ0554.

The protein localises to the cell membrane. This is an uncharacterized protein from Methanocaldococcus jannaschii (strain ATCC 43067 / DSM 2661 / JAL-1 / JCM 10045 / NBRC 100440) (Methanococcus jannaschii).